Reading from the N-terminus, the 208-residue chain is Putative 3-methyladenine DNA glycosylase (208 aa).

It belongs to the DNA glycosylase MPG family.

The sequence is that of Putative 3-methyladenine DNA glycosylase from Prosthecochloris aestuarii (strain DSM 271 / SK 413).